Consider the following 253-residue polypeptide: Type III pantothenate kinase (253 aa).

6–13 (DVGNTNIV) is a binding site for ATP. A substrate-binding site is contributed by 107–110 (GADR). Catalysis depends on D109, which acts as the Proton acceptor. Residue D129 coordinates K(+). T132 contacts ATP. T184 provides a ligand contact to substrate.

It belongs to the type III pantothenate kinase family. In terms of assembly, homodimer. Requires NH4(+) as cofactor. K(+) is required as a cofactor.

It is found in the cytoplasm. It catalyses the reaction (R)-pantothenate + ATP = (R)-4'-phosphopantothenate + ADP + H(+). Its pathway is cofactor biosynthesis; coenzyme A biosynthesis; CoA from (R)-pantothenate: step 1/5. Functionally, catalyzes the phosphorylation of pantothenate (Pan), the first step in CoA biosynthesis. This is Type III pantothenate kinase from Exiguobacterium sibiricum (strain DSM 17290 / CCUG 55495 / CIP 109462 / JCM 13490 / 255-15).